A 359-amino-acid chain; its full sequence is Heme A synthase (359 aa).

The next 6 membrane-spanning stretches (helical) occupy residues 23 to 43 (AVAF…VLGG), 85 to 105 (YAAL…FFEW), 109 to 129 (LLGR…WLRG), 137 to 157 (LKLL…WWMV), 172 to 192 (LAIH…LAAS), and 212 to 232 (AGLI…VAGL). Residue His-276 participates in heme binding. The next 3 helical transmembrane spans lie at 278-298 (MVAY…SGTL), 308-328 (IALL…LVLV), and 329-349 (VPLW…GMAV). His-337 provides a ligand contact to heme.

Belongs to the COX15/CtaA family. Type 2 subfamily. Interacts with CtaB. It depends on heme b as a cofactor.

Its subcellular location is the cell membrane. The catalysed reaction is Fe(II)-heme o + 2 A + H2O = Fe(II)-heme a + 2 AH2. It functions in the pathway porphyrin-containing compound metabolism; heme A biosynthesis; heme A from heme O: step 1/1. Functionally, catalyzes the conversion of heme O to heme A by two successive hydroxylations of the methyl group at C8. The first hydroxylation forms heme I, the second hydroxylation results in an unstable dihydroxymethyl group, which spontaneously dehydrates, resulting in the formyl group of heme A. The chain is Heme A synthase from Beijerinckia indica subsp. indica (strain ATCC 9039 / DSM 1715 / NCIMB 8712).